The chain runs to 70 residues: MPNFFRNGCIALVGSVAAMGAAHAEGGIAEAAGKALDSAQSDVTITAPKVMMVVATVVGVGILINMMRKA.

The signal sequence occupies residues 1-24; it reads MPNFFRNGCIALVGSVAAMGAAHA.

Homomer.

It localises to the fimbrium. In terms of biological role, fimbriae (also called pili) are polar filaments radiating from the surface of the bacterium to a length of 0.5-1.5 micrometers and numbering 100-300 per cell. They enable bacteria to colonize the epithelium of specific host organs. Flexible pili possess hemagglutinating function. This is Flexible pilin (aerA) from Aeromonas hydrophila.